Consider the following 1500-residue polypeptide: Alpha-1-macroglobulin (1500 aa).

The first 24 residues, 1–24 (MRRNQLPIPVFLLLLLLLPRDATA), serve as a signal peptide directing secretion. C48 and C86 are joined by a disulfide. 3 N-linked (GlcNAc...) asparagine glycosylation sites follow: N55, N61, and N157. 2 disulfide bridges follow: C249–C298 and C267–C286. N-linked (GlcNAc...) asparagine glycans are attached at residues N382 and N412. C469 and C562 are disulfide-bonded. N-linked (GlcNAc...) asparagine glycosylation occurs at N568. Intrachain disulfides connect C594-C785, C642-C689, C835-C863, C861-C897, C935-C1344, and C1094-C1142. Positions 686-746 (PRYCPMYQAY…QEVEVRETVR (61 aa)) are bait region. N-linked (GlcNAc...) asparagine glycans are attached at residues N883 and N944. A cross-link (isoglutamyl cysteine thioester (Cys-Gln)) is located at residues 986 to 989 (CGEQ). N-linked (GlcNAc...) asparagine glycosylation is present at N1005. Residues 1360-1500 (EGEAPFTLKV…FSSDSEQGNA (141 aa)) are receptor-binding domain. Residues N1390 and N1448 are each glycosylated (N-linked (GlcNAc...) asparagine).

It belongs to the protease inhibitor I39 (alpha-2-macroglobulin) family. In terms of assembly, homotetramer; disulfide-linked. As to expression, widely expressed. Highest level in ovary, testis, uterus and prostate. Protein found in plasma.

It localises to the secreted. Functionally, is able to inhibit all four classes of proteinases by a unique 'trapping' mechanism. This protein has a peptide stretch, called the 'bait region' which contains specific cleavage sites for different proteinases. When a proteinase cleaves the bait region, a conformational change is induced in the protein which traps the proteinase. The entrapped enzyme remains active against low molecular weight substrates (activity against high molecular weight substrates is greatly reduced). Following cleavage in the bait region a thioester bond is hydrolyzed and mediates the covalent binding of the protein to the proteinase. This is Alpha-1-macroglobulin from Rattus norvegicus (Rat).